The following is a 144-amino-acid chain: 6-pyruvoyl tetrahydrobiopterin synthase (144 aa).

The residue at position 18 (Ser18) is a Phosphoserine. His23 is a binding site for Zn(2+). Ser27 is modified (phosphoserine). The active-site Proton acceptor is the Cys42. 2 residues coordinate Zn(2+): His48 and His50. His89 functions as the Charge relay system in the catalytic mechanism. Tyr127 carries the post-translational modification Phosphotyrosine. The active-site Charge relay system is the Glu133.

Belongs to the PTPS family. In terms of assembly, homodimer. Homohexamer formed of two homotrimers in a head to head fashion. Requires Zn(2+) as cofactor. Post-translationally, phosphorylation of Ser-18 is required for maximal enzyme activity.

The catalysed reaction is 7,8-dihydroneopterin 3'-triphosphate = 6-pyruvoyl-5,6,7,8-tetrahydropterin + triphosphate + H(+). Its pathway is cofactor biosynthesis; tetrahydrobiopterin biosynthesis; tetrahydrobiopterin from 7,8-dihydroneopterin triphosphate: step 1/3. In terms of biological role, involved in the biosynthesis of tetrahydrobiopterin, an essential cofactor of aromatic amino acid hydroxylases. Catalyzes the transformation of 7,8-dihydroneopterin triphosphate into 6-pyruvoyl tetrahydropterin. The chain is 6-pyruvoyl tetrahydrobiopterin synthase from Mus musculus (Mouse).